A 1891-amino-acid chain; its full sequence is Protein TIC 214 (1891 aa).

6 consecutive transmembrane segments (helical) span residues 18 to 38 (IINS…FSIG), 64 to 84 (FITG…HLAL), 87 to 107 (PHTI…WNNH), 124 to 144 (LSIQ…HFIL), 172 to 192 (VGWL…LVWI), and 221 to 241 (IFSI…PSPI). Disordered stretches follow at residues 248–300 (EASK…EGWD), 788–807 (EEQT…DNKR), and 1580–1607 (KNRS…NLSP). The segment covering 256-268 (VESEEERDVEIET) has biased composition (acidic residues). Residues 1582 to 1601 (RSQEAKEPPSQRERGSDIEN) are compositionally biased toward basic and acidic residues.

Belongs to the TIC214 family. Part of the Tic complex.

The protein resides in the plastid. It localises to the chloroplast inner membrane. Its function is as follows. Involved in protein precursor import into chloroplasts. May be part of an intermediate translocation complex acting as a protein-conducting channel at the inner envelope. This Solanum lycopersicum (Tomato) protein is Protein TIC 214.